The sequence spans 449 residues: HSPB1-associated protein 1 homolog (449 aa).

The 165-residue stretch at 102–266 (WAYADYKYIA…DEARVAEALT (165 aa)) folds into the JmjC domain. Positions 385–395 (DQDKLRSDNKL) are enriched in basic and acidic residues. A disordered region spans residues 385–416 (DQDKLRSDNKLGQRSGQSVLQDTENPGGSGEM). Positions 396-410 (GQRSGQSVLQDTENP) are enriched in polar residues.

Its subcellular location is the cytoplasm. Functionally, may play a role in cellular stress response. The sequence is that of HSPB1-associated protein 1 homolog (hspbap1) from Danio rerio (Zebrafish).